We begin with the raw amino-acid sequence, 85 residues long: Cell division topological specificity factor (85 aa).

It belongs to the MinE family.

Functionally, prevents the cell division inhibition by proteins MinC and MinD at internal division sites while permitting inhibition at polar sites. This ensures cell division at the proper site by restricting the formation of a division septum at the midpoint of the long axis of the cell. The protein is Cell division topological specificity factor of Deinococcus geothermalis (strain DSM 11300 / CIP 105573 / AG-3a).